A 159-amino-acid chain; its full sequence is Phosphopantetheine adenylyltransferase (159 aa).

Thr-9 is a substrate binding site. ATP is bound by residues 9–10 (TF) and His-17. Residues Lys-41, Leu-73, and Arg-87 each contribute to the substrate site. Residues 88–90 (GLR), Glu-98, and 123–129 (YMFISAT) contribute to the ATP site.

It belongs to the bacterial CoaD family. In terms of assembly, homohexamer. It depends on Mg(2+) as a cofactor.

It localises to the cytoplasm. The enzyme catalyses (R)-4'-phosphopantetheine + ATP + H(+) = 3'-dephospho-CoA + diphosphate. It functions in the pathway cofactor biosynthesis; coenzyme A biosynthesis; CoA from (R)-pantothenate: step 4/5. Reversibly transfers an adenylyl group from ATP to 4'-phosphopantetheine, yielding dephospho-CoA (dPCoA) and pyrophosphate. The polypeptide is Phosphopantetheine adenylyltransferase (Nitrosomonas europaea (strain ATCC 19718 / CIP 103999 / KCTC 2705 / NBRC 14298)).